Reading from the N-terminus, the 266-residue chain is tRNA pseudouridine synthase A (266 aa).

The Nucleophile role is filled by D51. Position 106 (Y106) interacts with substrate.

This sequence belongs to the tRNA pseudouridine synthase TruA family.

The enzyme catalyses uridine(38/39/40) in tRNA = pseudouridine(38/39/40) in tRNA. Formation of pseudouridine at positions 38, 39 and 40 in the anticodon stem and loop of transfer RNAs. This is tRNA pseudouridine synthase A from Pyrococcus furiosus (strain ATCC 43587 / DSM 3638 / JCM 8422 / Vc1).